Consider the following 798-residue polypeptide: ABC transporter G family member 4 (798 aa).

Positions 1–51 are disordered; that stretch reads MEDIGNNNFEIIDDKSDEKNDENFEDKNSRNNINEEQILSNQQQQQQQQQQ. Residues 12–29 are compositionally biased toward basic and acidic residues; that stretch reads IDDKSDEKNDENFEDKNS. Residues 30-41 show a composition bias toward polar residues; sequence RNNINEEQILSN. The stretch at 34–83 forms a coiled coil; the sequence is NEEQILSNQQQQQQQQQQQQQQQQQQQQQQQQQQQQQQEQQQFKNEVINT. Positions 42 to 51 are enriched in low complexity; the sequence is QQQQQQQQQQ. The ABC transporter domain occupies 211-464; that stretch reads IDIEDIESQV…SIDSNYKCPP (254 aa). Residue 253 to 260 participates in ATP binding; the sequence is GPSGSGKS. A run of 7 helical transmembrane segments spans residues 540–560, 579–599, 628–648, 656–676, 687–707, 713–733, and 771–791; these read VVFF…SACF, LFFF…STFV, IVSS…IVHL, ILSL…VIAM, FSYC…LVPI, SFGW…IVII, and SIGI…IGLY. The 254-residue stretch at 540–793 folds into the ABC transmembrane type-2 domain; the sequence is VVFFSKIVIA…ILAYIGLYKF (254 aa).

The protein belongs to the ABC transporter superfamily. ABCG family. Eye pigment precursor importer (TC 3.A.1.204) subfamily.

The protein localises to the membrane. The chain is ABC transporter G family member 4 (abcG4) from Dictyostelium discoideum (Social amoeba).